Consider the following 335-residue polypeptide: Probable deoxyhypusine synthase (335 aa).

The Nucleophile role is filled by Lys-308.

It belongs to the deoxyhypusine synthase family. It depends on NAD(+) as a cofactor.

It catalyses the reaction [eIF5A protein]-L-lysine + spermidine = [eIF5A protein]-deoxyhypusine + propane-1,3-diamine. The protein operates within protein modification; eIF5A hypusination. Functionally, catalyzes the NAD-dependent oxidative cleavage of spermidine and the subsequent transfer of the butylamine moiety of spermidine to the epsilon-amino group of a specific lysine residue of the eIF-5A precursor protein to form the intermediate deoxyhypusine residue. The chain is Probable deoxyhypusine synthase from Thermococcus onnurineus (strain NA1).